A 37-amino-acid chain; its full sequence is Large ribosomal subunit protein bL36c (37 aa).

Belongs to the bacterial ribosomal protein bL36 family.

Its subcellular location is the plastid. The protein resides in the chloroplast. The chain is Large ribosomal subunit protein bL36c (rpl36) from Cyanidium caldarium (Red alga).